A 334-amino-acid chain; its full sequence is ADP-L-glycero-D-manno-heptose-6-epimerase (334 aa).

Residues 11 to 12 (FI), 32 to 33 (DN), K39, K54, 77 to 81 (QGACS), and N94 contribute to the NADP(+) site. Y141 serves as the catalytic Proton acceptor. K145 is a binding site for NADP(+). N171 is a substrate binding site. Residues V172 and K180 each coordinate NADP(+). Residue K180 is the Proton acceptor of the active site. Substrate contacts are provided by residues R182, H189, 203 to 206 (FGSN), R216, and Y295.

This sequence belongs to the NAD(P)-dependent epimerase/dehydratase family. HldD subfamily. Homopentamer. The cofactor is NADP(+).

It catalyses the reaction ADP-D-glycero-beta-D-manno-heptose = ADP-L-glycero-beta-D-manno-heptose. It participates in nucleotide-sugar biosynthesis; ADP-L-glycero-beta-D-manno-heptose biosynthesis; ADP-L-glycero-beta-D-manno-heptose from D-glycero-beta-D-manno-heptose 7-phosphate: step 4/4. In terms of biological role, catalyzes the interconversion between ADP-D-glycero-beta-D-manno-heptose and ADP-L-glycero-beta-D-manno-heptose via an epimerization at carbon 6 of the heptose. This chain is ADP-L-glycero-D-manno-heptose-6-epimerase, found in Neisseria meningitidis serogroup C / serotype 2a (strain ATCC 700532 / DSM 15464 / FAM18).